Consider the following 1278-residue polypeptide: SMC5-SMC6 complex localization factor protein 2 (1278 aa).

Disordered stretches follow at residues 1-235 (MTRR…LGAR), 248-337 (EQKK…KRTE), 443-491 (RINS…FIRH), and 509-582 (EPED…KETK). Positions 39–50 (KRTESPGDRKQS) are enriched in basic and acidic residues. Basic residues predominate over residues 94–103 (SSPKKLKPKR). 4 stretches are compositionally biased toward basic and acidic residues: residues 118–133 (GGKEHHKDRGVHESRR), 156–174 (LPKEIKAQKKKHQSPERRK), 180–199 (ESNREKNDRDRGKNSEDSRK), and 248–258 (EQKKLRKEQME). 2 stretches are compositionally biased toward polar residues: residues 259–277 (QRINSENSFSEASNLSLKS) and 318–329 (SDSWELSGSKQN). Composition is skewed to basic and acidic residues over residues 449-463 (KEQRNSVDSDLKSTK) and 469-489 (KARESFLEKRPDTSHQREKFI). Over residues 519–540 (ADSAPSNAGHHSSRNSDQVHSA) the composition is skewed to polar residues. Position 591 is a phosphoserine (Ser591). Disordered regions lie at residues 598-724 (PLNA…EEEE), 739-764 (RTPTTSGKPPAVSKGLRSQSSDMKEY), and 798-820 (IRQGRGIKSPLRTGDQDSTDDGD). The segment covering 609 to 630 (PKKDKERSSSKERSGHSTESSK) has biased composition (basic and acidic residues). 3 stretches are compositionally biased toward low complexity: residues 643–654 (SNESSGKNSGGS), 666–675 (PPAALEVVPS), and 688–697 (SGNSNAGSNA). The span at 707–724 (DSDEESLGYTLESDEEEE) shows a compositional bias: acidic residues. 3 positions are modified to phosphoserine: Ser708, Ser712, and Ser719. Positions 740-1278 (TPTTSGKPPA…QLHDFWVPDS (539 aa)) are interaction with SIMC1. The interval 769 to 1271 (TYTNTLERLV…NCRPTQGQLH (503 aa)) is NSE6-like domain. The required for interaction with SLF1 and RAD18 stretch occupies residues 807–1278 (PLRTGDQDST…QLHDFWVPDS (472 aa)).

Belongs to the FAM178 family. In terms of assembly, forms a heterodimer with SIMC1. Interacts with SLF1 (via N-terminus); this interaction links RAD18 to the SMC5-SMC6 complex. Interacts with RAD18; this interaction is increased in a SLF1-dependent manner. Interacts with SMC5 and SMC6.

Its subcellular location is the nucleus. The protein localises to the PML body. Plays a role in the DNA damage response (DDR) pathway by regulating postreplication repair of UV-damaged DNA and genomic stability maintenance. The SLF1-SLF2 complex acts to link RAD18 with the SMC5-SMC6 complex at replication-coupled interstrand cross-links (ICL) and DNA double-strand breaks (DSBs) sites on chromatin during DNA repair in response to stalled replication forks. Promotes the recruitment of the SMC5-SMC6 complex to DNA lesions. May play a role in SMC5-SMC6 complex recruitment for viral restriction. Forms a complex with SIMC1 and this complex is required to recruit SMC5-SMC6 complex to PML nuclear bodies and sites of viral replication. This Mus musculus (Mouse) protein is SMC5-SMC6 complex localization factor protein 2.